Consider the following 340-residue polypeptide: Protein RecA (340 aa).

An ATP-binding site is contributed by 74-81; the sequence is GPESSGKT.

This sequence belongs to the RecA family.

It localises to the cytoplasm. In terms of biological role, can catalyze the hydrolysis of ATP in the presence of single-stranded DNA, the ATP-dependent uptake of single-stranded DNA by duplex DNA, and the ATP-dependent hybridization of homologous single-stranded DNAs. It interacts with LexA causing its activation and leading to its autocatalytic cleavage. In Porphyromonas gingivalis (strain ATCC 33277 / DSM 20709 / CIP 103683 / JCM 12257 / NCTC 11834 / 2561), this protein is Protein RecA.